We begin with the raw amino-acid sequence, 514 residues long: MTDKLIIFDTTLRDGEQSPGASMTKEEKIRIAKHLERMKVDVIEAGFAASSNGDFDAIHTIAGLIKDSTICSLARANDKDIQRAADALKPAESFRIHTFIATSPLHMEKKLRMTPDQVFEQARLAVRFARKFTDNVEFSPEDGSRSDMDFLCRVLEAVIAEGATTINIADTVGYGVPELYGNLVKTLRERIPNSDKAIFSVHCHNDLGMAVANSLAGVKIGGARQIECTINGLGERAGNTSLEEIVMAVKTRKDYFGLDVGIDTSQIVPTSKLVSQITGFVVQPNKAVVGANAFAHASGIHQDGVLKARDTYEIMRAEDVGWTANKIVLGKLSGRNAFKQRLQELGVSLDSESELNAAFMRFKDLADRKAEIFDEDIIAIVSEESALAHEQEHFKFVSLSQHSETGEQPHAKVVFGVEGKEVTGEARGNGPVDATFNAIESEVGSGSELLLYSVNAITTGTQAQGEVTVRLSKSGRIVNGVGTDPDIVAASAKAYISALNKLHSKDDKVNPQRS.

Residues 5–268 enclose the Pyruvate carboxyltransferase domain; sequence LIIFDTTLRD…DVGIDTSQIV (264 aa). Positions 14, 202, 204, and 239 each coordinate Mn(2+). The regulatory domain stretch occupies residues 395 to 514; the sequence is KFVSLSQHSE…KDDKVNPQRS (120 aa).

It belongs to the alpha-IPM synthase/homocitrate synthase family. LeuA type 1 subfamily. In terms of assembly, homodimer. It depends on Mn(2+) as a cofactor.

It localises to the cytoplasm. The enzyme catalyses 3-methyl-2-oxobutanoate + acetyl-CoA + H2O = (2S)-2-isopropylmalate + CoA + H(+). The protein operates within amino-acid biosynthesis; L-leucine biosynthesis; L-leucine from 3-methyl-2-oxobutanoate: step 1/4. In terms of biological role, catalyzes the condensation of the acetyl group of acetyl-CoA with 3-methyl-2-oxobutanoate (2-ketoisovalerate) to form 3-carboxy-3-hydroxy-4-methylpentanoate (2-isopropylmalate). This chain is 2-isopropylmalate synthase, found in Burkholderia lata (strain ATCC 17760 / DSM 23089 / LMG 22485 / NCIMB 9086 / R18194 / 383).